The sequence spans 147 residues: Large ribosomal subunit protein bL9 (147 aa).

The protein belongs to the bacterial ribosomal protein bL9 family.

In terms of biological role, binds to the 23S rRNA. The protein is Large ribosomal subunit protein bL9 of Thermoanaerobacter pseudethanolicus (strain ATCC 33223 / 39E) (Clostridium thermohydrosulfuricum).